A 245-amino-acid chain; its full sequence is UPF0246 protein Cgl1995/cg2186 (245 aa).

Belongs to the UPF0246 family.

This Corynebacterium glutamicum (strain ATCC 13032 / DSM 20300 / JCM 1318 / BCRC 11384 / CCUG 27702 / LMG 3730 / NBRC 12168 / NCIMB 10025 / NRRL B-2784 / 534) protein is UPF0246 protein Cgl1995/cg2186.